Consider the following 504-residue polypeptide: Nuclear hormone receptor family member nhr-80 (504 aa).

Residues 27 to 103 constitute a DNA-binding region (nuclear receptor); sequence STRCLICSAQ…NGMKPGGVQP (77 aa). 2 NR C4-type zinc fingers span residues 30 to 50 and 66 to 86; these read CLIC…CSAC and CITG…CRSC. Over residues 177–192 the composition is skewed to low complexity; it reads SSSTSFSASTTTNYST. The interval 177 to 199 is disordered; sequence SSSTSFSASTTTNYSTPGPSPMA. The 253-residue stretch at 214–466 folds into the NR LBD domain; the sequence is EEMKLGERRR…KLVLQLLNLD (253 aa). Residues 455–466 are AF-2; sequence LDKLVLQLLNLD.

Belongs to the nuclear hormone receptor family. Interacts with nuclear hormone receptor nhr-49; the interaction is direct. As to expression, expressed in the intestine and in some head and tail neurons, as well as the ventral nerve cord.

The protein localises to the nucleus. In terms of biological role, transcription factor. Binds to regulatory elements and regulates transcription of target genes, including acyltransferase dgat-2. As part of a lysosome-to-nucleus retrograde lipid signaling pathway, acts as a direct nuclear receptor of oleoylethanolamide (OEA) and, acting in concert with nuclear hormone receptor nhr-49, activates the transcription of genes promoting longevity and mitochondrial beta-oxidation. Required to modulate expression of delta-9 fatty acid desaturases, thereby regulating lipid metabolism; in some contexts, acting in concert with nhr-49. Involved in modulation of lipid metabolism in response to the citrate-induced mitochondrial unfolded protein response (mtUPR), acting downstream of transcription factor dve-1 and ubiquitin-like protein 5. Plays a role in modulating mitochondrial morphology and function. Involved in positively modulating life-span in a germline-dependent manner, acting in concert with nuclear hormone receptor daf-12. Plays a role in transgenerational lipid accumulation in response to a high-fat diet. The chain is Nuclear hormone receptor family member nhr-80 from Caenorhabditis elegans.